Here is a 121-residue protein sequence, read N- to C-terminus: uncharacterized protein (121 aa).

2 disordered regions span residues 1–41 (MRRQ…QESR) and 94–121 (GGTI…GLRR). The span at 98 to 108 (SGQQSRNSSLP) shows a compositional bias: polar residues.

Predominantly expressed in tissues containing motile cilia. Also expressed in non-motile ciliated adult olfactory bulbs.

The protein resides in the cytoplasm. Its subcellular location is the cytoskeleton. It is found in the cilium basal body. This is an uncharacterized protein from Mus musculus (Mouse).